The sequence spans 425 residues: Enolase (425 aa).

Q162 lines the (2R)-2-phosphoglycerate pocket. E204 acts as the Proton donor in catalysis. Mg(2+) contacts are provided by D241, E282, and D309. (2R)-2-phosphoglycerate-binding residues include K334, R363, S364, and K385. K334 functions as the Proton acceptor in the catalytic mechanism.

Belongs to the enolase family. Mg(2+) serves as cofactor.

It is found in the cytoplasm. The protein resides in the secreted. Its subcellular location is the cell surface. The enzyme catalyses (2R)-2-phosphoglycerate = phosphoenolpyruvate + H2O. The protein operates within carbohydrate degradation; glycolysis; pyruvate from D-glyceraldehyde 3-phosphate: step 4/5. Its function is as follows. Catalyzes the reversible conversion of 2-phosphoglycerate (2-PG) into phosphoenolpyruvate (PEP). It is essential for the degradation of carbohydrates via glycolysis. The chain is Enolase from Corynebacterium jeikeium (strain K411).